Reading from the N-terminus, the 205-residue chain is Large ribosomal subunit protein uL18 (205 aa).

It belongs to the universal ribosomal protein uL18 family. In terms of assembly, part of the 50S ribosomal subunit. Contacts the 5S and 23S rRNAs.

In terms of biological role, this is one of the proteins that bind and probably mediate the attachment of the 5S RNA into the large ribosomal subunit, where it forms part of the central protuberance. This chain is Large ribosomal subunit protein uL18, found in Pyrobaculum neutrophilum (strain DSM 2338 / JCM 9278 / NBRC 100436 / V24Sta) (Thermoproteus neutrophilus).